The chain runs to 344 residues: Dihydroorotase (344 aa).

The Zn(2+) site is built by histidine 13 and histidine 15. Residues 15-17 and asparagine 41 each bind substrate; that span reads HLR. 3 residues coordinate Zn(2+): lysine 99, histidine 136, and histidine 174. N6-carboxylysine is present on lysine 99. Histidine 136 serves as a coordination point for substrate. Leucine 219 contacts substrate. Aspartate 247 serves as a coordination point for Zn(2+). Aspartate 247 is a catalytic residue. Positions 251 and 263 each coordinate substrate.

This sequence belongs to the metallo-dependent hydrolases superfamily. DHOase family. Class II DHOase subfamily. In terms of assembly, homodimer. Zn(2+) serves as cofactor.

The enzyme catalyses (S)-dihydroorotate + H2O = N-carbamoyl-L-aspartate + H(+). It participates in pyrimidine metabolism; UMP biosynthesis via de novo pathway; (S)-dihydroorotate from bicarbonate: step 3/3. Its function is as follows. Catalyzes the reversible cyclization of carbamoyl aspartate to dihydroorotate. This Acinetobacter baumannii (strain SDF) protein is Dihydroorotase.